Reading from the N-terminus, the 187-residue chain is Large ribosomal subunit protein bL17 (187 aa).

The interval 122-187 (PKVRSSRTST…EADAAEKSDK (66 aa)) is disordered. A compositionally biased stretch (low complexity) spans 127 to 144 (SRTSTATAPAAAAPAAEA). Composition is skewed to acidic residues over residues 145-157 (PAEE…EETD) and 165-180 (TPAE…VEAD).

This sequence belongs to the bacterial ribosomal protein bL17 family. Part of the 50S ribosomal subunit. Contacts protein L32.

This is Large ribosomal subunit protein bL17 from Clavibacter michiganensis subsp. michiganensis (strain NCPPB 382).